We begin with the raw amino-acid sequence, 396 residues long: Subtilisin-like protease 5 (396 aa).

Positions 1 to 20 (MTGFFTILSFSLAALSVTNA) are cleaved as a signal peptide. The propeptide occupies 21-116 (AQILSVPKGA…VEPDAIISQH (96 aa)). Residues 37–113 (YIVVMKDDTS…VAFVEPDAII (77 aa)) form the Inhibitor I9 domain. A glycan (N-linked (GlcNAc...) asparagine) is linked at asparagine 63. Positions 125–396 (PWGLSRLSNR…SRLLYNGSGR (272 aa)) constitute a Peptidase S8 domain. Residues aspartate 156 and histidine 187 each act as charge relay system in the active site. Asparagine 230 and asparagine 248 each carry an N-linked (GlcNAc...) asparagine glycan. Serine 342 (charge relay system) is an active-site residue. Residues 376 to 389 (PTIRNPGPDTTSRL) show a composition bias toward polar residues. Positions 376 to 396 (PTIRNPGPDTTSRLLYNGSGR) are disordered. Asparagine 392 is a glycosylation site (N-linked (GlcNAc...) asparagine).

The protein belongs to the peptidase S8 family.

It is found in the secreted. In terms of biological role, secreted subtilisin-like serine protease with keratinolytic activity that contributes to pathogenicity. This chain is Subtilisin-like protease 5 (SUB5), found in Trichophyton verrucosum (Cattle ringworm fungus).